The chain runs to 255 residues: Sulfur carrier protein FdhD (255 aa).

The active-site Cysteine persulfide intermediate is Cys103.

This sequence belongs to the FdhD family.

It localises to the cytoplasm. Functionally, required for formate dehydrogenase (FDH) activity. Acts as a sulfur carrier protein that transfers sulfur from IscS to the molybdenum cofactor prior to its insertion into FDH. In Sulfurisphaera tokodaii (strain DSM 16993 / JCM 10545 / NBRC 100140 / 7) (Sulfolobus tokodaii), this protein is Sulfur carrier protein FdhD.